The chain runs to 306 residues: Oligopeptide transport system permease protein OppB (306 aa).

Topologically, residues methionine 1–glutamate 11 are cytoplasmic. A helical membrane pass occupies residues alanine 12–glycine 32. Over serine 33–lysine 99 the chain is Periplasmic. In terms of domain architecture, ABC transmembrane type-1 spans phenylalanine 94–valine 293. A helical transmembrane segment spans residues leucine 100–alanine 120. Topologically, residues leucine 121–threonine 137 are cytoplasmic. Residues glycine 138–leucine 158 traverse the membrane as a helical segment. Over histidine 159–glycine 169 the chain is Periplasmic. A helical transmembrane segment spans residues alanine 170–alanine 190. The Cytoplasmic portion of the chain corresponds to arginine 191–leucine 229. The helical transmembrane segment at leucine 230–isoleucine 250 threads the bilayer. Over glutamate 251 to threonine 279 the chain is Periplasmic. Residues isoleucine 280–isoleucine 300 form a helical membrane-spanning segment. At aspartate 301–tyrosine 306 the chain is on the cytoplasmic side.

It belongs to the binding-protein-dependent transport system permease family. OppBC subfamily. In terms of assembly, the complex is composed of two ATP-binding proteins (OppD and OppF), two transmembrane proteins (OppB and OppC) and a solute-binding protein (OppA).

It localises to the cell inner membrane. Functionally, part of the ABC transporter complex OppABCDF involved in the uptake of oligopeptides. Probably responsible for the translocation of the substrate across the membrane. This Shigella flexneri protein is Oligopeptide transport system permease protein OppB (oppB).